A 1033-amino-acid chain; its full sequence is Collagen alpha-2(I) chain (1033 aa).

The segment at 1 to 1033 (SGGFDFSFLP…FGYEGDFYRA (1033 aa)) is disordered. Composition is skewed to low complexity over residues 25-71 (LGPG…ARGP), 154-175 (SRGSDGSVGPVGPAGPIGSAGP), and 221-242 (PGANGLTGAKGAAGLPGVAGAP). Positions 276–285 (GESGGKGEPG) are enriched in gly residues. Residues 286–296 (SAGPQGPPGSS) show a composition bias toward low complexity. Residues 318 to 327 (GLRGGPGSRG) show a composition bias toward gly residues. Composition is skewed to low complexity over residues 340–356 (PAGARGASGPAGVRGPS) and 391–410 (LPGIDGRPGPIGPAGARGEA). Gly residues predominate over residues 459-468 (GVQGGKGEQG). Low complexity-rich tracts occupy residues 519–528 (PSGAIGSRGP) and 540–550 (EPGVVGAPGTA). Gly residues predominate over residues 551–560 (GPAGSGGLPG). Composition is skewed to low complexity over residues 583–627 (VGTT…PRGS) and 634–654 (VGPAGPNGFAGPAGAAGQPGA). Basic and acidic residues predominate over residues 655 to 664 (KGERGTKGPK). Low complexity predominate over residues 672 to 682 (PTGPVGSAGPA). The span at 692–701 (GSRGDGGPPG) shows a compositional bias: gly residues. Residues 703–712 (TGFPGAAGRT) are compositionally biased toward low complexity. Positions 749–758 (GETGAGGPPG) are enriched in gly residues. 2 stretches are compositionally biased toward low complexity: residues 766–793 (SGEPGTAGPPGTAGPQGLLGAPGILGLP) and 801–811 (LPGVAGAVGEP). Positions 812–834 (GPLGIGPPGARGPSGGVGPGVNG) are enriched in gly residues. Positions 873–909 (AAGAPGPHGAVGPAGKHGNRGEPGPVGSAGPVGALGP) are enriched in low complexity. The segment covering 919–930 (RGDKGEAGDKGP) has biased composition (basic and acidic residues). Over residues 1003–1015 (SGPPGPPGPPGPP) the composition is skewed to pro residues.

It belongs to the fibrillar collagen family. In terms of assembly, trimers of one alpha 2(I) and two alpha 1(I) chains. Interacts (via C-terminus) with TMEM131 (via PapD-L domain); the interaction is direct and is involved in assembly and TRAPPIII ER-to-Golgi transport complex-dependent secretion of collagen. Prolines at the third position of the tripeptide repeating unit (G-X-Y) are hydroxylated in some or all of the chains. In terms of tissue distribution, expressed in bone.

It is found in the secreted. The protein localises to the extracellular space. It localises to the extracellular matrix. In terms of biological role, type I collagen is a member of group I collagen (fibrillar forming collagen). The protein is Collagen alpha-2(I) chain of Mylodon darwinii (Giant ground sloth).